The primary structure comprises 144 residues: Cell division protein SepF (144 aa).

Belongs to the SepF family. Homodimer. Interacts with FtsZ.

The protein resides in the cytoplasm. In terms of biological role, cell division protein that is part of the divisome complex and is recruited early to the Z-ring. Probably stimulates Z-ring formation, perhaps through the cross-linking of FtsZ protofilaments. Its function overlaps with FtsA. This Geobacillus sp. (strain WCH70) protein is Cell division protein SepF.